The sequence spans 457 residues: Argininosuccinate lyase (457 aa).

It belongs to the lyase 1 family. Argininosuccinate lyase subfamily.

The protein resides in the cytoplasm. The catalysed reaction is 2-(N(omega)-L-arginino)succinate = fumarate + L-arginine. It functions in the pathway amino-acid biosynthesis; L-arginine biosynthesis; L-arginine from L-ornithine and carbamoyl phosphate: step 3/3. The chain is Argininosuccinate lyase from Staphylococcus carnosus (strain TM300).